The chain runs to 140 residues: uncharacterized protein (140 aa).

Helical transmembrane passes span 20–42 (ILYY…YVSG), 88–110 (FVAL…PVLL), and 115–137 (IIYT…GLLQ).

The protein localises to the cell membrane. This is an uncharacterized protein from Archaeoglobus fulgidus (strain ATCC 49558 / DSM 4304 / JCM 9628 / NBRC 100126 / VC-16).